We begin with the raw amino-acid sequence, 115 residues long: Large ribosomal subunit protein bL19 (115 aa).

This sequence belongs to the bacterial ribosomal protein bL19 family.

This protein is located at the 30S-50S ribosomal subunit interface and may play a role in the structure and function of the aminoacyl-tRNA binding site. The sequence is that of Large ribosomal subunit protein bL19 from Streptococcus sanguinis (strain SK36).